A 427-amino-acid polypeptide reads, in one-letter code: Serine hydroxymethyltransferase (427 aa).

(6S)-5,6,7,8-tetrahydrofolate is bound by residues Leu122 and 126–128; that span reads GHL. Residue Lys231 is modified to N6-(pyridoxal phosphate)lysine. Residue 355-357 coordinates (6S)-5,6,7,8-tetrahydrofolate; it reads SPF.

Belongs to the SHMT family. As to quaternary structure, homodimer. The cofactor is pyridoxal 5'-phosphate.

It is found in the cytoplasm. The enzyme catalyses (6R)-5,10-methylene-5,6,7,8-tetrahydrofolate + glycine + H2O = (6S)-5,6,7,8-tetrahydrofolate + L-serine. The protein operates within one-carbon metabolism; tetrahydrofolate interconversion. It functions in the pathway amino-acid biosynthesis; glycine biosynthesis; glycine from L-serine: step 1/1. Functionally, catalyzes the reversible interconversion of serine and glycine with tetrahydrofolate (THF) serving as the one-carbon carrier. This reaction serves as the major source of one-carbon groups required for the biosynthesis of purines, thymidylate, methionine, and other important biomolecules. Also exhibits THF-independent aldolase activity toward beta-hydroxyamino acids, producing glycine and aldehydes, via a retro-aldol mechanism. This is Serine hydroxymethyltransferase from Synechococcus sp. (strain ATCC 27144 / PCC 6301 / SAUG 1402/1) (Anacystis nidulans).